Reading from the N-terminus, the 30-residue chain is EVIAQLTMIAMIGIAGPMIIFLLAVRRGNL.

Residues 1–6 (EVIAQL) are Lumenal-facing. Residues 7-21 (TMIAMIGIAGPMIIF) form a helical membrane-spanning segment. The Cytoplasmic portion of the chain corresponds to 22 to 30 (LLAVRRGNL).

Belongs to the Psb30/Ycf12 family. As to quaternary structure, PSII is composed of 1 copy each of membrane proteins PsbA, PsbB, PsbC, PsbD, PsbE, PsbF, PsbH, PsbI, PsbJ, PsbK, PsbL, PsbM, PsbT, PsbX, PsbY, PsbZ, Psb30/Ycf12, peripheral proteins PsbO, CyanoQ (PsbQ), PsbU, PsbV and a large number of cofactors. It forms dimeric complexes. Requires PSII binds multiple chlorophylls, carotenoids and specific lipids. as cofactor.

The protein resides in the cellular thylakoid membrane. In terms of biological role, a core subunit of photosystem II (PSII), probably helps stabilize the reaction center. PSII is a light-driven water plastoquinone oxidoreductase, using light energy to abstract electrons from H(2)O, generating a proton gradient subsequently used for ATP formation. The protein is Photosystem II reaction center protein Psb30 of Thermostichus vulcanus (Synechococcus vulcanus).